Here is a 350-residue protein sequence, read N- to C-terminus: Biotin synthase (350 aa).

The Radical SAM core domain maps to 63 to 281 (GDIELATLLS…IAVARITMPK (219 aa)). 3 residues coordinate [4Fe-4S] cluster: C78, C82, and C85. Residues C122, C153, C213, and R285 each coordinate [2Fe-2S] cluster.

It belongs to the radical SAM superfamily. Biotin synthase family. Homodimer. [4Fe-4S] cluster serves as cofactor. [2Fe-2S] cluster is required as a cofactor.

It carries out the reaction (4R,5S)-dethiobiotin + (sulfur carrier)-SH + 2 reduced [2Fe-2S]-[ferredoxin] + 2 S-adenosyl-L-methionine = (sulfur carrier)-H + biotin + 2 5'-deoxyadenosine + 2 L-methionine + 2 oxidized [2Fe-2S]-[ferredoxin]. It functions in the pathway cofactor biosynthesis; biotin biosynthesis; biotin from 7,8-diaminononanoate: step 2/2. Catalyzes the conversion of dethiobiotin (DTB) to biotin by the insertion of a sulfur atom into dethiobiotin via a radical-based mechanism. This Acidovorax ebreus (strain TPSY) (Diaphorobacter sp. (strain TPSY)) protein is Biotin synthase.